Consider the following 62-residue polypeptide: Protein DsrB (62 aa).

It belongs to the DsrB family.

The chain is Protein DsrB from Citrobacter koseri (strain ATCC BAA-895 / CDC 4225-83 / SGSC4696).